Reading from the N-terminus, the 163-residue chain is ATP synthase subunit b 1 (163 aa).

Residues 7–27 (AETWVAIAFVILMGIFAYLGV) traverse the membrane as a helical segment.

The protein belongs to the ATPase B chain family. F-type ATPases have 2 components, F(1) - the catalytic core - and F(0) - the membrane proton channel. F(1) has five subunits: alpha(3), beta(3), gamma(1), delta(1), epsilon(1). F(0) has three main subunits: a(1), b(2) and c(10-14). The alpha and beta chains form an alternating ring which encloses part of the gamma chain. F(1) is attached to F(0) by a central stalk formed by the gamma and epsilon chains, while a peripheral stalk is formed by the delta and b chains.

It localises to the cell inner membrane. F(1)F(0) ATP synthase produces ATP from ADP in the presence of a proton or sodium gradient. F-type ATPases consist of two structural domains, F(1) containing the extramembraneous catalytic core and F(0) containing the membrane proton channel, linked together by a central stalk and a peripheral stalk. During catalysis, ATP synthesis in the catalytic domain of F(1) is coupled via a rotary mechanism of the central stalk subunits to proton translocation. Functionally, component of the F(0) channel, it forms part of the peripheral stalk, linking F(1) to F(0). This is ATP synthase subunit b 1 from Rhodopseudomonas palustris (strain HaA2).